We begin with the raw amino-acid sequence, 89 residues long: Small ribosomal subunit protein uS15 (89 aa).

It belongs to the universal ribosomal protein uS15 family. As to quaternary structure, part of the 30S ribosomal subunit. Forms a bridge to the 50S subunit in the 70S ribosome, contacting the 23S rRNA.

Its function is as follows. One of the primary rRNA binding proteins, it binds directly to 16S rRNA where it helps nucleate assembly of the platform of the 30S subunit by binding and bridging several RNA helices of the 16S rRNA. Forms an intersubunit bridge (bridge B4) with the 23S rRNA of the 50S subunit in the ribosome. This is Small ribosomal subunit protein uS15 from Latilactobacillus sakei subsp. sakei (strain 23K) (Lactobacillus sakei subsp. sakei).